The chain runs to 389 residues: Tryptophan synthase beta chain (389 aa).

Lys84 bears the N6-(pyridoxal phosphate)lysine mark.

This sequence belongs to the TrpB family. In terms of assembly, tetramer of two alpha and two beta chains. The cofactor is pyridoxal 5'-phosphate.

It carries out the reaction (1S,2R)-1-C-(indol-3-yl)glycerol 3-phosphate + L-serine = D-glyceraldehyde 3-phosphate + L-tryptophan + H2O. It functions in the pathway amino-acid biosynthesis; L-tryptophan biosynthesis; L-tryptophan from chorismate: step 5/5. Functionally, the beta subunit is responsible for the synthesis of L-tryptophan from indole and L-serine. In Clostridium novyi (strain NT), this protein is Tryptophan synthase beta chain.